The following is a 303-amino-acid chain: UDP-N-acetylenolpyruvoylglucosamine reductase (303 aa).

One can recognise an FAD-binding PCMH-type domain in the interval 29–196; that stretch reads KIGGPADILI…LEAVLQLEQK (168 aa). The active site involves R174. S225 (proton donor) is an active-site residue. E295 is an active-site residue.

This sequence belongs to the MurB family. FAD serves as cofactor.

It localises to the cytoplasm. The catalysed reaction is UDP-N-acetyl-alpha-D-muramate + NADP(+) = UDP-N-acetyl-3-O-(1-carboxyvinyl)-alpha-D-glucosamine + NADPH + H(+). It functions in the pathway cell wall biogenesis; peptidoglycan biosynthesis. Its function is as follows. Cell wall formation. In Bacillus velezensis (strain DSM 23117 / BGSC 10A6 / LMG 26770 / FZB42) (Bacillus amyloliquefaciens subsp. plantarum), this protein is UDP-N-acetylenolpyruvoylglucosamine reductase.